Here is a 427-residue protein sequence, read N- to C-terminus: Gamma-glutamyl phosphate reductase (427 aa).

This sequence belongs to the gamma-glutamyl phosphate reductase family.

Its subcellular location is the cytoplasm. The catalysed reaction is L-glutamate 5-semialdehyde + phosphate + NADP(+) = L-glutamyl 5-phosphate + NADPH + H(+). It functions in the pathway amino-acid biosynthesis; L-proline biosynthesis; L-glutamate 5-semialdehyde from L-glutamate: step 2/2. Functionally, catalyzes the NADPH-dependent reduction of L-glutamate 5-phosphate into L-glutamate 5-semialdehyde and phosphate. The product spontaneously undergoes cyclization to form 1-pyrroline-5-carboxylate. This Allorhizobium ampelinum (strain ATCC BAA-846 / DSM 112012 / S4) (Agrobacterium vitis (strain S4)) protein is Gamma-glutamyl phosphate reductase.